Reading from the N-terminus, the 133-residue chain is Cytochrome c-type biogenesis protein CcmE (133 aa).

Residues 1-7 lie on the Cytoplasmic side of the membrane; that stretch reads MKRKHKR. Residues 8 to 28 form a helical; Signal-anchor for type II membrane protein membrane-spanning segment; the sequence is LLFIIVTFIIFGSSVVIVLNK. Residues 29-133 are Periplasmic-facing; sequence LRSNISFFFT…NYKPGKYRAK (105 aa). 2 residues coordinate heme: H121 and Y125.

It belongs to the CcmE/CycJ family.

It localises to the cell inner membrane. Heme chaperone required for the biogenesis of c-type cytochromes. Transiently binds heme delivered by CcmC and transfers the heme to apo-cytochromes in a process facilitated by CcmF and CcmH. In Ehrlichia canis (strain Jake), this protein is Cytochrome c-type biogenesis protein CcmE.